The following is a 142-amino-acid chain: Hemoglobin subunit alpha-C (142 aa).

The residue at position 2 (Ala-2) is an N-acetylalanine. The 141-residue stretch at 2 to 142 (ALNCDDKAHI…VSGLLTSKYR (141 aa)) folds into the Globin domain. His-59 contacts O2. His-88 serves as a coordination point for heme b.

This sequence belongs to the globin family. Heterotetramer of either two alpha-B chains or two alpha-C chains and two beta chains. The two major hemoglobins, B and C, associate upon deoxygenation to form a trimer of tetramers, BC2, that has a much lower affinity for oxygen than either component alone. Red blood cells.

The alpha-C chain is a component of adult hemoglobin C. This is Hemoglobin subunit alpha-C from Aquarana catesbeiana (American bullfrog).